The primary structure comprises 480 residues: MSYTPSSNDLIAISPMLILCGVALLSLVVQFLIPEEDEGKPLWVLSILGILVAMYALYHTTNSPGYGKFFGSQISISPLTVWLSAIYLIAGLITLLVAPPFLSQHKTLFPEFFPLMLFCLSGMMFLTSGYDLIVIFVGLEILSLSLYVMIGMARTSVSALESAMKYFLLGTFSSGFMLLGIAFLYGGSGTTNLDGALRGLSLKGYEANFSKLGLGLFFVGVSFKAALVPFHSWTPDVYEGAQTPITGFMASAGKASALGLVIILFNHIPMGEMGNVWKYLMGTIALISMTWGNIVALKQDNLKRMLAYSSISHAGYIVAGIACGAGLEALYYLFSYSLLNLAAFAIISYLEQGKHEVTVNGISHLSGEHPFTALALSLVFLSFAGFPPLIGFWTKLFLLQKMAESDLFFHRVLLFGAVANSCIAFYYYMKITIQSYMKQETGVVAGARDLPSLPTLGFLIFLLCVFFTAGWIFFQPGSLL.

13 helical membrane-spanning segments follow: residues 13–33, 41–61, 81–101, 107–127, 132–152, 167–187, 212–232, 245–265, 276–296, 314–334, 373–393, 413–433, and 454–474; these read ISPMLILCGVALLSLVVQFLI, PLWVLSILGILVAMYALYHTT, VWLSAIYLIAGLITLLVAPPF, TLFPEFFPLMLFCLSGMMFLT, LIVIFVGLEILSLSLYVMIGM, FLLGTFSSGFMLLGIAFLYGG, LGLGLFFVGVSFKAALVPFHS, ITGFMASAGKASALGLVIILF, VWKYLMGTIALISMTWGNIVA, AGYIVAGIACGAGLEALYYLF, ALALSLVFLSFAGFPPLIGFW, LLFGAVANSCIAFYYYMKITI, and PTLGFLIFLLCVFFTAGWIFF.

The protein belongs to the complex I subunit 2 family. As to quaternary structure, NDH-1 is composed of 14 different subunits. Subunits NuoA, H, J, K, L, M, N constitute the membrane sector of the complex.

The protein resides in the cell inner membrane. The catalysed reaction is a quinone + NADH + 5 H(+)(in) = a quinol + NAD(+) + 4 H(+)(out). NDH-1 shuttles electrons from NADH, via FMN and iron-sulfur (Fe-S) centers, to quinones in the respiratory chain. The immediate electron acceptor for the enzyme in this species is believed to be ubiquinone. Couples the redox reaction to proton translocation (for every two electrons transferred, four hydrogen ions are translocated across the cytoplasmic membrane), and thus conserves the redox energy in a proton gradient. This Leptospira biflexa serovar Patoc (strain Patoc 1 / Ames) protein is NADH-quinone oxidoreductase subunit N.